The primary structure comprises 113 residues: Hydrogenase maturation factor HypA (113 aa).

His2 is a Ni(2+) binding site. 4 residues coordinate Zn(2+): Cys73, Cys76, Cys89, and Cys92.

This sequence belongs to the HypA/HybF family.

Involved in the maturation of [NiFe] hydrogenases. Required for nickel insertion into the metal center of the hydrogenase. In Azorhizobium caulinodans (strain ATCC 43989 / DSM 5975 / JCM 20966 / LMG 6465 / NBRC 14845 / NCIMB 13405 / ORS 571), this protein is Hydrogenase maturation factor HypA.